Reading from the N-terminus, the 364-residue chain is 4-hydroxythreonine-4-phosphate dehydrogenase (364 aa).

Substrate is bound by residues His-148 and Thr-149. A divalent metal cation-binding residues include His-177, His-216, and His-301. Substrate is bound by residues Lys-309, Asn-318, and Arg-327.

It belongs to the PdxA family. In terms of assembly, homodimer. Zn(2+) is required as a cofactor. Mg(2+) serves as cofactor. It depends on Co(2+) as a cofactor.

It is found in the cytoplasm. The enzyme catalyses 4-(phosphooxy)-L-threonine + NAD(+) = 3-amino-2-oxopropyl phosphate + CO2 + NADH. It participates in cofactor biosynthesis; pyridoxine 5'-phosphate biosynthesis; pyridoxine 5'-phosphate from D-erythrose 4-phosphate: step 4/5. Catalyzes the NAD(P)-dependent oxidation of 4-(phosphooxy)-L-threonine (HTP) into 2-amino-3-oxo-4-(phosphooxy)butyric acid which spontaneously decarboxylates to form 3-amino-2-oxopropyl phosphate (AHAP). The protein is 4-hydroxythreonine-4-phosphate dehydrogenase of Campylobacter jejuni subsp. jejuni serotype O:2 (strain ATCC 700819 / NCTC 11168).